The chain runs to 279 residues: Protein phosphatase 1 regulatory subunit 3E (279 aa).

2 positions are modified to phosphoserine: serine 16 and serine 33. A disordered region spans residues 28-87 (RSQRPSLEEESEEEPGEGGTRPGARSRAHVPGRGRRARSAPAGGGGARTARSRSPDTRKR). A compositionally biased stretch (basic residues) spans 51–65 (ARSRAHVPGRGRRAR). Position 66 is a phosphoserine (serine 66). Positions 87–90 (RVRF) match the PP1-binding motif motif. The 106-residue stretch at 154–259 (AARLQAQRIC…NNGGRDYALL (106 aa)) folds into the CBM21 domain. Positions 176–198 (GSARVLDLAYEKRVSVRWSADGW) are glycogen-binding motif. The interval 248 to 256 (WDNNGGRDY) is substrate-binding motif.

Acts as a glycogen-targeting subunit for PP1. PP1 is involved in glycogen metabolism and contributes to the activation of glycogen synthase leading to an increase in glycogen synthesis. The sequence is that of Protein phosphatase 1 regulatory subunit 3E (Ppp1r3e) from Mus musculus (Mouse).